Consider the following 233-residue polypeptide: Large ribosomal subunit protein uL1 (233 aa).

It belongs to the universal ribosomal protein uL1 family. In terms of assembly, part of the 50S ribosomal subunit.

Functionally, binds directly to 23S rRNA. The L1 stalk is quite mobile in the ribosome, and is involved in E site tRNA release. Protein L1 is also a translational repressor protein, it controls the translation of the L11 operon by binding to its mRNA. The sequence is that of Large ribosomal subunit protein uL1 from Parvibaculum lavamentivorans (strain DS-1 / DSM 13023 / NCIMB 13966).